A 444-amino-acid polypeptide reads, in one-letter code: tRNA pseudouridine synthase Pus10 (444 aa).

Residue D265 is the Nucleophile of the active site. Substrate-binding residues include Y333 and Y405.

The protein belongs to the pseudouridine synthase Pus10 family.

It carries out the reaction uridine(54) in tRNA = pseudouridine(54) in tRNA. The enzyme catalyses uridine(55) in tRNA = pseudouridine(55) in tRNA. Its function is as follows. Responsible for synthesis of pseudouridine from uracil-54 and uracil-55 in the psi GC loop of transfer RNAs. This chain is tRNA pseudouridine synthase Pus10, found in Thermofilum pendens (strain DSM 2475 / Hrk 5).